A 434-amino-acid chain; its full sequence is [Arg8]-vasotocin receptor (434 aa).

The Extracellular portion of the chain corresponds to 1–27 (MGRIANQTTASNDTDPFGRNEEVAKME). Residues Asn-6 and Asn-12 are each glycosylated (N-linked (GlcNAc...) asparagine). Residues 28–48 (ITVLSVTFFVAVIGNLSVLLA) form a helical membrane-spanning segment. Residues 49 to 67 (MHNTKKKSSRMHLFIKHLS) are Cytoplasmic-facing. Residues 68 to 88 (LADMVVAFFQVLPQLCWEITF) form a helical membrane-spanning segment. The Extracellular portion of the chain corresponds to 89-98 (RFYGPDFLCR). Cys-97 and Cys-176 form a disulfide bridge. A helical transmembrane segment spans residues 99–119 (IVKHLQVLGMFASTYMMVMMT). The Cytoplasmic segment spans residues 120–141 (LDRYIAICHPLKTLQQPTQRAY). A helical membrane pass occupies residues 142-162 (IMIGSTWLCSLLLSTPQYFIF). At 163 to 191 (SLSEIQNGSYVYDCWGHFIEPWGIRAYIT) the chain is on the extracellular side. The chain crosses the membrane as a helical span at residues 192 to 212 (WITVGIFLIPVIILMICYGFI). The Cytoplasmic portion of the chain corresponds to 213-257 (CHSIWKNIKCKTMRGTRNTKDGMIGKVSVSSVTIISRAKLRTVKM). A helical transmembrane segment spans residues 258-278 (TLVIVLAYIVCWAPFFIVQMW). Residues 279–295 (SVWDENFSWDDSENAAV) lie on the Extracellular side of the membrane. A helical membrane pass occupies residues 296–316 (TLSALLASLNSCCNPWIYMLF). Residues 317 to 434 (SGHLLYDFLR…KSSQCMSKES (118 aa)) are Cytoplasmic-facing.

The protein belongs to the G-protein coupled receptor 1 family. Vasopressin/oxytocin receptor subfamily. In terms of tissue distribution, expressed in pituitary, liver, gills, swim bladder and lateral line.

Its subcellular location is the cell membrane. Its function is as follows. Binds to vasotocin. Produces an induction of membrane chloride currents indicating that it is coupled to the inositol phosphate/calcium pathway. The polypeptide is [Arg8]-vasotocin receptor (Catostomus commersonii (White sucker)).